Here is a 189-residue protein sequence, read N- to C-terminus: Putative zinc finger protein ORF189 (189 aa).

Residues 114 to 137 form a C2H2-type zinc finger; that stretch reads YVCPYCVSRFPTVRALKIHLKRRH.

The protein is Putative zinc finger protein ORF189 of Acidianus two-tailed virus (ATV).